A 320-amino-acid chain; its full sequence is GDP-L-fucose synthase (320 aa).

An NADP(+)-binding site is contributed by 14 to 20 (GGSGLVG). Tyrosine 142 serves as the catalytic Proton donor/acceptor. NADP(+) is bound by residues lysine 146, 169–172 (PTNI), and histidine 185. Substrate contacts are provided by lysine 193, arginine 214, and aspartate 276.

It belongs to the NAD(P)-dependent epimerase/dehydratase family. Fucose synthase subfamily.

It catalyses the reaction GDP-beta-L-fucose + NADP(+) = GDP-4-dehydro-alpha-D-rhamnose + NADPH + H(+). The protein operates within nucleotide-sugar biosynthesis; GDP-L-fucose biosynthesis via de novo pathway; GDP-L-fucose from GDP-alpha-D-mannose: step 2/2. Functionally, catalyzes the two-step NADP-dependent conversion of GDP-4-dehydro-6-deoxy-D-mannose to GDP-fucose, involving an epimerase and a reductase reaction. This chain is GDP-L-fucose synthase (ger), found in Dictyostelium discoideum (Social amoeba).